We begin with the raw amino-acid sequence, 323 residues long: Ankyrin repeat and SOCS box protein 11 (323 aa).

ANK repeat units lie at residues 64–93, 97–126, 130–159, 162–191, 195–224, and 227–256; these read ADRS…NVNL, NRVS…HVNG, HGAT…KAQL, HLAS…NIDQ, HLGT…NVNH, and WLDT…NLKC. An SOCS box domain is found at 273-323; that stretch reads SVEQALLLREGPPALSQLCRLCVRKCLGRNCHKTIHKLYLPDPLEKFLLYQ.

It belongs to the ankyrin SOCS box (ASB) family. Substrate-recognition component of the ECS(ASB11) complex, composed of ASB11, CUL5, ELOB, ELOC and RNF7/RBX2.

It localises to the endoplasmic reticulum. The protein operates within protein modification; protein ubiquitination. In terms of biological role, substrate-recognition component of a cullin-5-RING E3 ubiquitin-protein ligase complex (ECS complex, also named CRL5 complex), which mediates the ubiquitination and subsequent proteasomal degradation of target proteins, such as BIK, DIRAS2 and RPN1. The ECS(ASB11) complex acts as a regulator of the endoplasmic reticulum unfolded protein response by mediating ubiquitination and degradation of BIK. In Bos taurus (Bovine), this protein is Ankyrin repeat and SOCS box protein 11 (ASB11).